The following is a 354-amino-acid chain: Uroporphyrinogen decarboxylase (354 aa).

Substrate contacts are provided by residues 27–31 (RQAGR), Asp-77, Tyr-154, Thr-209, and His-327.

It belongs to the uroporphyrinogen decarboxylase family. As to quaternary structure, homodimer.

The protein resides in the cytoplasm. The enzyme catalyses uroporphyrinogen III + 4 H(+) = coproporphyrinogen III + 4 CO2. The protein operates within porphyrin-containing compound metabolism; protoporphyrin-IX biosynthesis; coproporphyrinogen-III from 5-aminolevulinate: step 4/4. Functionally, catalyzes the decarboxylation of four acetate groups of uroporphyrinogen-III to yield coproporphyrinogen-III. This is Uroporphyrinogen decarboxylase from Salmonella agona (strain SL483).